The sequence spans 471 residues: Putative multidrug resistance protein MdtD (471 aa).

Over 1 to 11 (MTDLPDSTRWQ) the chain is Periplasmic. The chain crosses the membrane as a helical span at residues 12-32 (LWIVAFGFFMQSLDTTIVNTA). The Cytoplasmic portion of the chain corresponds to 33–48 (LPSMAQSLGESPLHMH). The helical transmembrane segment at 49-69 (MVIVSYVLTVAVMLPASGWLA) threads the bilayer. Residues 70 to 76 (DKVGVRN) are Periplasmic-facing. A helical membrane pass occupies residues 77 to 97 (IFFTAIVLFTLGSLFCALSGT). The Cytoplasmic portion of the chain corresponds to 98-101 (LNEL). Residues 102-124 (LLARALQGVGGAMMVPVGRLTVM) traverse the membrane as a helical segment. Over 125-137 (KIVPREQYMAAMT) the chain is Periplasmic. The chain crosses the membrane as a helical span at residues 138–158 (FVTLPGQVGPLLGPALGGLLV). Residues 159–164 (EYASWH) lie on the Cytoplasmic side of the membrane. A helical transmembrane segment spans residues 165–185 (WIFLINIPVGIIGAIATLMLM). Topologically, residues 186–196 (PNYTMQTRRFD) are periplasmic. A helical membrane pass occupies residues 197-217 (LSGFLLLAVGMAVLTLALDGS). Residues 218–224 (KGTGLSP) are Cytoplasmic-facing. Residues 225-245 (LTIDGLVAVGVVALVLYLLHA) traverse the membrane as a helical segment. Residues 246–262 (RNNNRALFSLKLFRTRT) lie on the Periplasmic side of the membrane. Residues 263 to 283 (FSLGLAGSFAGRIGSGMLPFM) form a helical membrane-spanning segment. The Cytoplasmic segment spans residues 284–285 (TP). Residues 286-306 (VFLQIGLGFSPFHAGLMMIPM) form a helical membrane-spanning segment. Residues 307-341 (VLGSMGMKRIVVQVVNRFGYRRVLVATTLGLSLVT) lie on the Periplasmic side of the membrane. A helical transmembrane segment spans residues 342–362 (LLFMTTALLGWYYVLPFVLFL). Topologically, residues 363–395 (QGMVNSTRFSSMNTLTLKDLPDNLASSGNSLLS) are cytoplasmic. The chain crosses the membrane as a helical span at residues 396–416 (MIMQLSMSIGVTIAGLLLGLF). Topologically, residues 417–430 (GSQHVSVDSGTTQT) are periplasmic. Residues 431 to 451 (VFMYTWLSMAFIIALPAFIFA) traverse the membrane as a helical segment. Over 452–471 (RVPNDTHQNVAISRRKRSAQ) the chain is Cytoplasmic.

It belongs to the major facilitator superfamily. TCR/Tet family.

The protein localises to the cell inner membrane. The polypeptide is Putative multidrug resistance protein MdtD (Escherichia coli O8 (strain IAI1)).